The following is a 248-amino-acid chain: MKSILNDFLLMIQFFTRIPVNKNLQCEKENFRRGAFFLPVVAFIIGGMEFLIYLALKNFLPPNVIIVLLILFTAMITGGLHMDGLADTCDGFFSLRDKERIIEIMKDSRIGSYGTIALIIDLLLKYQLLYSLVLKGYSIAIVLAPIIGRISILFLCLSKRTAKKNGSGNIFIGNMSKPIIFFITTIVLALSTYFLGLRATIIPFIGVLLITYLLYLLCLNKINGLTGDTLGACNELGEITFLLILLMI.

The next 6 helical transmembrane spans lie at 36–56 (FFLPVVAFIIGGMEFLIYLAL), 59–79 (FLPPNVIIVLLILFTAMITGG), 114–134 (GTIALIIDLLLKYQLLYSLVL), 137–157 (YSIAIVLAPIIGRISILFLCL), 170–190 (IFIGNMSKPIIFFITTIVLAL), and 199–219 (ATIIPFIGVLLITYLLYLLCL).

This sequence belongs to the CobS family. Mg(2+) serves as cofactor.

Its subcellular location is the cell membrane. The catalysed reaction is alpha-ribazole + adenosylcob(III)inamide-GDP = adenosylcob(III)alamin + GMP + H(+). It carries out the reaction alpha-ribazole 5'-phosphate + adenosylcob(III)inamide-GDP = adenosylcob(III)alamin 5'-phosphate + GMP + H(+). Its pathway is cofactor biosynthesis; adenosylcobalamin biosynthesis; adenosylcobalamin from cob(II)yrinate a,c-diamide: step 7/7. In terms of biological role, joins adenosylcobinamide-GDP and alpha-ribazole to generate adenosylcobalamin (Ado-cobalamin). Also synthesizes adenosylcobalamin 5'-phosphate from adenosylcobinamide-GDP and alpha-ribazole 5'-phosphate. This is Adenosylcobinamide-GDP ribazoletransferase from Clostridium botulinum (strain Okra / Type B1).